A 489-amino-acid polypeptide reads, in one-letter code: Glutamate--tRNA ligase (489 aa).

The 'HIGH' region motif lies at 12 to 22; it reads PSPTGIPHVGM. The 'KMSKS' region motif lies at 256–260; the sequence is KLSKR. Lys259 lines the ATP pocket.

This sequence belongs to the class-I aminoacyl-tRNA synthetase family. Glutamate--tRNA ligase type 1 subfamily. In terms of assembly, monomer.

It localises to the cytoplasm. It catalyses the reaction tRNA(Glu) + L-glutamate + ATP = L-glutamyl-tRNA(Glu) + AMP + diphosphate. Catalyzes the attachment of glutamate to tRNA(Glu) in a two-step reaction: glutamate is first activated by ATP to form Glu-AMP and then transferred to the acceptor end of tRNA(Glu). This chain is Glutamate--tRNA ligase, found in Mycobacterium marinum (strain ATCC BAA-535 / M).